The primary structure comprises 741 residues: Endoplasmic reticulum membrane sensor NFE2L1 (741 aa).

The chain crosses the membrane as a helical; Signal-anchor for type II membrane protein span at residues 7 to 24; that stretch reads YLTEGLLQFTILLSLIGV. Disordered regions lie at residues 108–148 and 198–220; these read DPEG…TEQG and QKEQ…WSGE. The span at 113–131 shows a compositional bias: polar residues; the sequence is VSGSQPNSGLALESSSGLQ. Residues 191 to 199 form a cholesterol recognition/amino acid consensus (CRAC) region region; the sequence is VFDYSHRQK. The segment covering 198-216 has biased composition (basic and acidic residues); it reads QKEQDVDKELQDGREREDT. N-linked (GlcNAc...) asparagine glycans are attached at residues asparagine 319 and asparagine 331. The segment at 350-354 is CPD; that stretch reads SPEVE. A glycan (N-linked (GlcNAc...) asparagine) is linked at asparagine 394. 2 disordered regions span residues 441-501 and 551-582; these read EEEF…DSET and SALD…QMSR. Residues 447 to 451 carry the Destruction motif motif; that stretch reads DSGLS. Positions 447-492 are enriched in low complexity; the sequence is DSGLSLDSSHSPSSLSSSEGSSSSSSSSSSSSASSSASSSFSEEGA. Serine 497 carries the phosphoserine; by CK2 modification. The span at 567 to 582 shows a compositional bias: basic and acidic residues; sequence GSKEKQADFLDKQMSR. A Phosphoserine modification is found at serine 568. The bZIP domain occupies 623 to 686; that stretch reads LIRDIRRRGK…RQMKQKVQSL (64 aa). The interval 625-644 is basic motif; it reads RDIRRRGKNKMAAQNCRKRK. Residues 651 to 665 are leucine-zipper; the sequence is LERDVEDLQRDKARL. The interval 722–741 is disordered; it reads RTMADQQARRQERKPKDRRK. Positions 730 to 737 match the Nuclear localization signal motif; that stretch reads RRQERKPK. Over residues 732–741 the composition is skewed to basic residues; it reads QERKPKDRRK.

It belongs to the bZIP family. CNC subfamily. Interacts with KEAP1. In terms of assembly, interacts (via CPD region) with FBXW7; leading to its ubiquitination and degradation. Interacts with SYVN1/HRD1; leading to its ubiquitination and degradation. Interacts (when ubiquitinated) with DDI2; leading to its cleavage. As to quaternary structure, interacts (via the bZIP domain) with small MAF protein (MAFF, MAFG or MAFK); required for binding to antioxidant response elements (AREs) on DNA. Interacts (via Destruction motif) with BTRC; leading to its ubiquitination and degradation. Interacts with CEBPB; the heterodimer represses expression of DSPP during odontoblast differentiation. Interacts with MOTS-c, a peptide produced by the mitochondrially encoded 12S rRNA MT-RNR1. Cleaved at Leu-104 by the aspartyl protease DDI2 following retrotranslocation, releasing the protein from the endoplasmic reticulum membrane and forming the transcription factor NRF1 that translocates into the nucleus. Ubiquitination is prerequisite for cleavage by aspartyl protease DDI2. Post-translationally, N-glycosylated in normal conditions, when it has a single-pass type II membrane protein topology, with the DNA-binding domain facing the endoplasmic reticulum lumen. Deglycosylated during retrotranslocation to the cytosolic side of the membrane, to have a single-pass type III membrane protein topology with the major part of the protein facing the cytosol. In terms of processing, ubiquitinated by the SCF(FBXW7) complex and SYVN1/HRD1, leading to its degradation by the proteasome. Ubiquitinated during retrotranslocation to the cytosolic side of the membrane: ubiquitination does not lead to degradation and is required for processing by the aspartyl protease DDI2 and subsequent release from the endoplasmic reticulum membrane. Phosphorylation by CK2 at Ser-497 inhibits transcription factor activity, possibly by affecting DNA-binding activity. Phosphorylation at Ser-568 is required for interaction with CEBPB. Post-translationally, ubiquitinated by the SCF(BTRC) complex in the nucleus, leading to its degradation by the proteasome. As to expression, isoform 1: Widely expressed including kidney, brown fat, white fat, large intestine, small intestine, stomach, lung, brain and liver. Isoform 1: Expressed in mouse embryonic fibroblasts (MEF). Isoform 2: Widely expressed including kidney, brown fat, white fat, large intestine, small intestine, stomach, lung, brain and liver. Isoform 2: levels in white fat, lung and liver are increased compared to isoform 1 (at protein level). Isoform 2: levels are elevated in brown fat and brain, but are reduced in liver compared to isoform 1 levels. Isoform 2: Expressed in mouse embryonic fibroblasts (MEF).

It is found in the endoplasmic reticulum membrane. It localises to the nucleus. Its subcellular location is the cytoplasm. In terms of biological role, endoplasmic reticulum membrane sensor that translocates into the nucleus in response to various stresses to act as a transcription factor. Constitutes a precursor of the transcription factor NRF1. Able to detect various cellular stresses, such as cholesterol excess, oxidative stress or proteasome inhibition. In response to stress, it is released from the endoplasmic reticulum membrane following cleavage by the protease DDI2 and translocates into the nucleus to form the transcription factor NRF1. Acts as a key sensor of cholesterol excess: in excess cholesterol conditions, the endoplasmic reticulum membrane form of the protein directly binds cholesterol via its CRAC motif, preventing cleavage and release of the transcription factor NRF1, thereby allowing expression of genes promoting cholesterol removal, such as CD36. Involved in proteasome homeostasis: in response to proteasome inhibition, it is released from the endoplasmic reticulum membrane, translocates to the nucleus and activates expression of genes encoding proteasome subunits. CNC-type bZIP family transcription factor that translocates to the nucleus and regulates expression of target genes in response to various stresses. Heterodimerizes with small-Maf proteins (MAFF, MAFG or MAFK) and binds DNA motifs including the antioxidant response elements (AREs), which regulate expression of genes involved in oxidative stress response. Activates or represses expression of target genes, depending on the context. Plays a key role in cholesterol homeostasis by acting as a sensor of cholesterol excess: in low cholesterol conditions, translocates into the nucleus and represses expression of genes involved in defense against cholesterol excess, such as CD36. In excess cholesterol conditions, the endoplasmic reticulum membrane form of the protein directly binds cholesterol via its CRAC motif, preventing cleavage and release of the transcription factor NRF1, thereby allowing expression of genes promoting cholesterol removal. Critical for redox balance in response to oxidative stress: acts by binding the AREs motifs on promoters and mediating activation of oxidative stress response genes, such as GCLC, GCLM, GSS, MT1 and MT2. Plays an essential role during fetal liver hematopoiesis: probably has a protective function against oxidative stress and is involved in lipid homeostasis in the liver. Involved in proteasome homeostasis: in response to proteasome inhibition, mediates the 'bounce-back' of proteasome subunits by translocating into the nucleus and activating expression of genes encoding proteasome subunits. Also involved in regulating glucose flux. Together with CEBPB; represses expression of DSPP during odontoblast differentiation. In response to ascorbic acid induction, activates expression of SP7/Osterix in osteoblasts. Functionally, transcription factor that binds the antioxidant response elements (ARE) consensus sequence on promoters and activates their expression. Its function is as follows. Transcription factor that binds the extended kappa 3 site of the TNF-alpha promoter after Fc gamma RIII stimulation and participates in the induction of this cytokine. In Mus musculus (Mouse), this protein is Endoplasmic reticulum membrane sensor NFE2L1.